The following is a 451-amino-acid chain: Probable D-serine dehydratase (451 aa).

Lys119 is modified (N6-(pyridoxal phosphate)lysine).

It belongs to the serine/threonine dehydratase family. DsdA subfamily. Pyridoxal 5'-phosphate is required as a cofactor.

It carries out the reaction D-serine = pyruvate + NH4(+). This is Probable D-serine dehydratase from Acidovorax sp. (strain JS42).